The sequence spans 164 residues: Transcription elongation factor GreA (164 aa).

Belongs to the GreA/GreB family.

Its function is as follows. Necessary for efficient RNA polymerase transcription elongation past template-encoded arresting sites. The arresting sites in DNA have the property of trapping a certain fraction of elongating RNA polymerases that pass through, resulting in locked ternary complexes. Cleavage of the nascent transcript by cleavage factors such as GreA or GreB allows the resumption of elongation from the new 3'terminus. GreA releases sequences of 2 to 3 nucleotides. This is Transcription elongation factor GreA from Helicobacter pylori (strain P12).